Consider the following 343-residue polypeptide: N-acetyl-gamma-glutamyl-phosphate reductase (343 aa).

Cys-149 is a catalytic residue.

Belongs to the NAGSA dehydrogenase family. Type 1 subfamily.

The protein resides in the cytoplasm. The catalysed reaction is N-acetyl-L-glutamate 5-semialdehyde + phosphate + NADP(+) = N-acetyl-L-glutamyl 5-phosphate + NADPH + H(+). It functions in the pathway amino-acid biosynthesis; L-arginine biosynthesis; N(2)-acetyl-L-ornithine from L-glutamate: step 3/4. Functionally, catalyzes the NADPH-dependent reduction of N-acetyl-5-glutamyl phosphate to yield N-acetyl-L-glutamate 5-semialdehyde. This chain is N-acetyl-gamma-glutamyl-phosphate reductase, found in Alkalilimnicola ehrlichii (strain ATCC BAA-1101 / DSM 17681 / MLHE-1).